The primary structure comprises 1284 residues: A-type inclusion protein A25 homolog (1284 aa).

The interval lysine 340 to glutamate 383 is disordered. Basic and acidic residues predominate over residues glutamate 348–lysine 357. Repeat copies occupy residues valine 611–glutamate 637, aspartate 638–glycine 665, asparagine 666–glycine 689, asparagine 690–aspartate 720, threonine 721–aspartate 751, methionine 752–threonine 780, serine 781–serine 811, alanine 812–serine 842, tyrosine 843–alanine 871, and lysine 872–glutamate 912. Positions valine 611–glutamate 912 are 10 X approximate tandem repeats. Residues proline 1169–serine 1234 form a disordered region. The span at valine 1180 to proline 1192 shows a compositional bias: low complexity. Residues serine 1211–alanine 1221 show a composition bias toward polar residues.

Belongs to the poxviridae A25 protein family. As to quaternary structure, interacts (via N-terminus) with protein A26.

It localises to the virion. Structural protein that forms a matrix surrounding the mature virion (MV) through interaction with protein A26. Presence of protein A25 in the virion structurally prevents direct virus-cell fusion mechanism. The protein is A-type inclusion protein A25 homolog (ATI) of Apodemus sylvaticus (European woodmouse).